A 351-amino-acid polypeptide reads, in one-letter code: CREB homolog crh-2 (351 aa).

Disordered regions lie at residues 46-104 (EPCT…EPLG) and 119-149 (SPSA…HQQQ). The segment covering 82 to 95 (GSSSGSPSSSLSSP) has biased composition (low complexity). A bZIP domain is found at 282–345 (SLKIVRRKIK…RDLQQKLHQY (64 aa)). Residues 284–304 (KIVRRKIKNKLSAQESRRKRK) are basic motif. Positions 307 to 314 (IDALEGRL) are leucine-zipper.

Belongs to the bZIP family.

Its subcellular location is the nucleus. Transcription factor. Plays a role in regulating the developmentally arrested larval state known as dauer, when induced by long-term exposure to the Gram-negative bacterium P.aeruginosa PAO1, but dispensable for dauer formation induced by starvation. Involved in regulating expression of microRNA mir-243, during long-term exposure to P.aeruginosa PAO1. This is CREB homolog crh-2 from Caenorhabditis elegans.